Reading from the N-terminus, the 428-residue chain is Anaerobic glycerol-3-phosphate dehydrogenase subunit B (428 aa).

This sequence belongs to the anaerobic G-3-P dehydrogenase subunit B family. As to quaternary structure, composed of a catalytic GlpA/B dimer and of membrane bound GlpC. It depends on FMN as a cofactor.

The catalysed reaction is a quinone + sn-glycerol 3-phosphate = dihydroxyacetone phosphate + a quinol. The protein operates within polyol metabolism; glycerol degradation via glycerol kinase pathway; glycerone phosphate from sn-glycerol 3-phosphate (anaerobic route): step 1/1. Functionally, conversion of glycerol 3-phosphate to dihydroxyacetone. Uses fumarate or nitrate as electron acceptor. This is Anaerobic glycerol-3-phosphate dehydrogenase subunit B from Pasteurella multocida (strain Pm70).